Consider the following 532-residue polypeptide: Probable rhamnogalacturonase B (532 aa).

A signal peptide spans 1-21 (MRINTLSLFSLVSLVPTLALA). A disulfide bond links Cys-42 and Cys-68. Asp-219 serves as the catalytic Proton donor. An intrachain disulfide couples Cys-221 to Cys-238. Asn-239 is a glycosylation site (N-linked (GlcNAc...) asparagine). Residue His-294 is part of the active site. An N-linked (GlcNAc...) asparagine glycan is attached at Asn-321. 2 disulfide bridges follow: Cys-344-Cys-350 and Cys-374-Cys-383. Low complexity-rich tracts occupy residues 466 to 475 (TVAAATSTPA) and 490 to 499 (QPSQQSPGQS). Residues 466–532 (TVAAATSTPA…HRHHQRHGHH (67 aa)) are disordered. Positions 521–532 (AGHRHHQRHGHH) are enriched in basic residues.

It belongs to the glycosyl hydrolase 28 family.

It is found in the secreted. The enzyme catalyses Endohydrolysis of alpha-D-GalA-(1-&gt;2)-alpha-L-Rha glycosidic bond in the rhamnogalacturonan I backbone with initial inversion of anomeric configuration releasing oligosaccharides with beta-D-GalA at the reducing end.. Its function is as follows. Pectinolytic enzymes consist of four classes of enzymes: pectine lyase, polygalacturonase, pectin methylesterase and rhamnogalacturonase. Hydrolyzes alpha-D-galacturonopyranosyl-(1,2)-alpha-L-rhamnopyranosyl linkages in the backbone of the hairy regions of pectins. The protein is Probable rhamnogalacturonase B (rhgB) of Aspergillus oryzae (strain ATCC 42149 / RIB 40) (Yellow koji mold).